Reading from the N-terminus, the 535-residue chain is SIR4-interacting protein SIF2 (535 aa).

The LisH domain occupies 4 to 36 (TSEELNYLIWRYCQEMGHEVSALALQDETRVLE). A disordered region spans residues 104-140 (EGRFTLETNSESNKAGEDGASTVERETQEDDTNSIDS). Positions 130–140 (TQEDDTNSIDS) are enriched in acidic residues. Phosphoserine is present on S137. WD repeat units lie at residues 155 to 186 (VKLD…RLAR), 218 to 248 (KTTN…RLWN), 259 to 289 (FHRA…ILWN), 316 to 345 (GDGS…FVYQ), 357 to 387 (GHHG…RIWH), 399 to 428 (GHSQ…RLWS), 440 to 470 (VDGV…NVYD), and 503 to 534 (SQDN…SVVA).

Homotetramer. Interacts with SIR4 N-terminal domain. Interacts with a complex composed of SIN3 and RPD3. Identified in the Set3C complex with HOS2, HST1, SNT1, CPR1, HOS4/YIL112W and SET3.

The protein resides in the nucleus. Functionally, antagonizes telomeric silencing in yeast. May recruit SIR4 to non-telomeric sites or repression. The polypeptide is SIR4-interacting protein SIF2 (SIF2) (Saccharomyces cerevisiae (strain ATCC 204508 / S288c) (Baker's yeast)).